Consider the following 158-residue polypeptide: 3-dehydroquinate dehydratase (158 aa).

Tyr-22 serves as the catalytic Proton acceptor. Positions 74, 80, and 87 each coordinate substrate. Residue His-100 is the Proton donor of the active site. Substrate contacts are provided by residues 101–102 (IS) and Arg-111.

Belongs to the type-II 3-dehydroquinase family. As to quaternary structure, homododecamer.

It carries out the reaction 3-dehydroquinate = 3-dehydroshikimate + H2O. It functions in the pathway metabolic intermediate biosynthesis; chorismate biosynthesis; chorismate from D-erythrose 4-phosphate and phosphoenolpyruvate: step 3/7. Functionally, catalyzes a trans-dehydration via an enolate intermediate. The chain is 3-dehydroquinate dehydratase from Helicobacter hepaticus (strain ATCC 51449 / 3B1).